The primary structure comprises 864 residues: DNA mismatch repair protein MutS (864 aa).

607 to 614 (GPNMGGKS) serves as a coordination point for ATP.

It belongs to the DNA mismatch repair MutS family.

This protein is involved in the repair of mismatches in DNA. It is possible that it carries out the mismatch recognition step. This protein has a weak ATPase activity. This Neisseria meningitidis serogroup A / serotype 4A (strain DSM 15465 / Z2491) protein is DNA mismatch repair protein MutS.